Consider the following 163-residue polypeptide: Nucleotide-binding protein SYNPCC7002_A1983 (163 aa).

This sequence belongs to the YajQ family.

In terms of biological role, nucleotide-binding protein. The sequence is that of Nucleotide-binding protein SYNPCC7002_A1983 from Picosynechococcus sp. (strain ATCC 27264 / PCC 7002 / PR-6) (Agmenellum quadruplicatum).